The following is an 811-amino-acid chain: Mitochondrial intermediate peptidase (811 aa).

Residues 1-25 (MRSGSRLSNYLVRLSGRVSFTQKRS) constitute a mitochondrion transit peptide. The disordered stretch occupies residues 423–450 (TENGEKASTDTSTSTTTSTTTTDSTTTT). Over residues 431–450 (TDTSTSTTTSTTTTDSTTTT) the composition is skewed to low complexity. Residue His-593 coordinates Zn(2+). Residue Glu-594 is part of the active site. The Zn(2+) site is built by His-597 and His-600.

This sequence belongs to the peptidase M3 family. Zn(2+) serves as cofactor.

It is found in the mitochondrion matrix. It carries out the reaction Release of an N-terminal octapeptide as second stage of processing of some proteins imported into the mitochondrion.. Functionally, cleaves proteins, imported into the mitochondrion, to their mature size. While most mitochondrial precursor proteins are processed to the mature form in one step by mitochondrial processing peptidase (MPP), the sequential cleavage by MIP of an octapeptide after initial processing by MPP is a required step for a subgroup of nuclear-encoded precursor proteins destined for the matrix or the inner membrane. The polypeptide is Mitochondrial intermediate peptidase (OCT1) (Lodderomyces elongisporus (strain ATCC 11503 / CBS 2605 / JCM 1781 / NBRC 1676 / NRRL YB-4239) (Yeast)).